The following is a 225-amino-acid chain: Rho GDP-dissociation inhibitor 3 (225 aa).

It belongs to the Rho GDI family. As to expression, primarily expressed in pancreas and brain.

Its subcellular location is the cytoplasm. In terms of biological role, inhibits GDP/GTP exchange reaction of RhoB. Interacts specifically with the GDP- and GTP-bound forms of post-translationally processed Rhob and Rhog proteins, both of which show a growth-regulated expression in mammalian cells. Stimulates the release of the GDP-bound but not the GTP-bound RhoB protein. Also inhibits the GDP/GTP exchange of RhoB but shows less ability to inhibit the dissociation of prebound GTP. The sequence is that of Rho GDP-dissociation inhibitor 3 (ARHGDIG) from Homo sapiens (Human).